A 235-amino-acid polypeptide reads, in one-letter code: MDTENRSRADLALPNPQESSSAPDIELLEASPAKAAPPKQTWRTFLKKELEFLGATQILVGLICLCFGTIVCSVLYVSDFDEEVLLLYKLGYPFWGAVLFVLSGFLSIISERKNTLYLVRGSLGANIVSSIAAGTGIAMLILNLTNNFAYMNNCKNVTEDDGCFVASFTTELVLMMLFLTILAFCSAVLFTIYRIGQELESKKVPDDRLYEELNVYSPIYSELEDKGETSSPVDS.

The segment at 1-23 is disordered; that stretch reads MDTENRSRADLALPNPQESSSAP. The Cytoplasmic segment spans residues 1-51; the sequence is MDTENRSRADLALPNPQESSSAPDIELLEASPAKAAPPKQTWRTFLKKELE. The helical transmembrane segment at 52–71 threads the bilayer; the sequence is FLGATQILVGLICLCFGTIV. Topologically, residues 72–89 are extracellular; the sequence is CSVLYVSDFDEEVLLLYK. A helical membrane pass occupies residues 90–109; that stretch reads LGYPFWGAVLFVLSGFLSII. The Cytoplasmic portion of the chain corresponds to 110-122; sequence SERKNTLYLVRGS. The helical transmembrane segment at 123 to 142 threads the bilayer; sequence LGANIVSSIAAGTGIAMLIL. Residues 143–171 lie on the Extracellular side of the membrane; that stretch reads NLTNNFAYMNNCKNVTEDDGCFVASFTTE. A helical membrane pass occupies residues 172 to 191; it reads LVLMMLFLTILAFCSAVLFT. At 192 to 235 the chain is on the cytoplasmic side; it reads IYRIGQELESKKVPDDRLYEELNVYSPIYSELEDKGETSSPVDS. A phosphotyrosine mark is found at tyrosine 210 and tyrosine 216. The residue at position 217 (serine 217) is a Phosphoserine. At tyrosine 220 the chain carries Phosphotyrosine.

Belongs to the MS4A family. In terms of assembly, tetramer of an alpha chain, a beta chain, and two disulfide linked gamma chains. Binds LILRB1. Interacts with FGR. Interacts with FGR and FES/FPS. Interacts with LYN. In terms of processing, phosphorylated on tyrosine residues by LYN.

It localises to the membrane. In terms of biological role, high affinity receptor that binds to the Fc region of immunoglobulins epsilon. Aggregation of FCER1 by multivalent antigens is required for the full mast cell response, including the release of preformed mediators (such as histamine) by degranulation and de novo production of lipid mediators and cytokines. Also mediates the secretion of important lymphokines. Binding of allergen to receptor-bound IgE leads to cell activation and the release of mediators responsible for the manifestations of allergy. The polypeptide is High affinity immunoglobulin epsilon receptor subunit beta (Ms4a2) (Mus musculus (Mouse)).